The sequence spans 1281 residues: Zinc finger transcription factor Trps1 (1281 aa).

Residues 1-198 form a disordered region; sequence MVRKKNPPLR…VPSDGGVRLN (198 aa). Residue Lys-29 forms a Glycyl lysine isopeptide (Lys-Gly) (interchain with G-Cter in SUMO2) linkage. Residues 40 to 49 are compositionally biased toward polar residues; that stretch reads DQMSENTDQS. The span at 53-63 shows a compositional bias: basic and acidic residues; that stretch reads ELNHKEEHSLH. A Glycyl lysine isopeptide (Lys-Gly) (interchain with G-Cter in SUMO2) cross-link involves residue Lys-76. Phosphoserine is present on residues Ser-90 and Ser-127. The span at 148–162 shows a compositional bias: basic and acidic residues; the sequence is LETKEDQKMSPKATE. Positions 163 to 189 are enriched in polar residues; sequence ETGQAQSGQANCQGLSPVSVASKNPQV. Ser-178 and Ser-216 each carry phosphoserine. The C2H2-type 1; atypical zinc finger occupies 222 to 247; sequence FKCNICGYGYYGNDPTDLIKHFRKYH. Residue Lys-263 forms a Glycyl lysine isopeptide (Lys-Gly) (interchain with G-Cter in SUMO2) linkage. The C2H2-type 2; atypical zinc-finger motif lies at 333–358; that stretch reads FRCKFCNFTYMGNSSTELEQHFLQTH. The segment at 365–394 is disordered; sequence SLPSSEVAKPSEKNSNKSIPALQSSDSGDL. The span at 380-391 shows a compositional bias: polar residues; that stretch reads NKSIPALQSSDS. Glycyl lysine isopeptide (Lys-Gly) (interchain with G-Cter in SUMO2) cross-links involve residues Lys-418, Lys-457, Lys-474, and Lys-488. The tract at residues 483–512 is disordered; it reads QNDLAKSSEGETMTKTDKSSSGAKKKDFSS. Basic and acidic residues predominate over residues 488–512; sequence KSSEGETMTKTDKSSSGAKKKDFSS. Residues 614–637 form a C2H2-type 3; atypical zinc finger; that stretch reads HQCHQCSFTTPDVDVLLFHYESVH. The interval 635–819 is mediates interaction with GLI3; it reads SVHESQASDV…SLGLLTPVSG (185 aa). Residue Lys-645 forms a Glycyl lysine isopeptide (Lys-Gly) (interchain with G-Cter in SUMO2) linkage. 2 consecutive C2H2-type zinc fingers follow at residues 666–689 and 692–715; these read HSCT…RRAH and YKCR…NTVH. Lys-737 participates in a covalent cross-link: Glycyl lysine isopeptide (Lys-Gly) (interchain with G-Cter in SUMO2). Thr-751 carries the post-translational modification Phosphothreonine. A Glycyl lysine isopeptide (Lys-Gly) (interchain with G-Cter in SUMO2) cross-link involves residue Lys-755. Lys-766 is covalently cross-linked (Glycyl lysine isopeptide (Lys-Gly) (interchain with G-Cter in SUMO1); alternate). Lys-766 participates in a covalent cross-link: Glycyl lysine isopeptide (Lys-Gly) (interchain with G-Cter in SUMO2); alternate. Glycyl lysine isopeptide (Lys-Gly) (interchain with G-Cter in SUMO2) cross-links involve residues Lys-825, Lys-850, Lys-877, and Lys-879. Positions 856 to 887 are disordered; that stretch reads APAGGEKSGALPQQYPASGENKSKDESQSLLR. A GATA-type zinc finger spans residues 896–920; the sequence is CANCLTTKTSLWRKNANGGYVCNAC. Glycyl lysine isopeptide (Lys-Gly) (interchain with G-Cter in SUMO2) cross-links involve residues Lys-925, Lys-937, and Lys-965. Residues 961 to 977 show a composition bias toward polar residues; sequence EQLNKQQRGSNEEQVNG. Positions 961-1000 are disordered; the sequence is EQLNKQQRGSNEEQVNGSPLERRSEDHLTESHQREIPLPS. Ser-978 carries the phosphoserine modification. The segment covering 980 to 995 has biased composition (basic and acidic residues); the sequence is LERRSEDHLTESHQRE. A mediates interaction with RNF4 region spans residues 985-1184; the sequence is EDHLTESHQR…PTANGASKEK (200 aa). Residues Lys-1003, Lys-1012, Lys-1030, and Lys-1040 each participate in a glycyl lysine isopeptide (Lys-Gly) (interchain with G-Cter in SUMO2) cross-link. The tract at residues 1039 to 1080 is disordered; it reads IKSPQESTGDPGNSSSVSEGKGSSERGSPIEKYMRPAKHPNY. The segment covering 1040–1049 has biased composition (polar residues); sequence KSPQESTGDP. At Ser-1041 the chain carries Phosphoserine. Low complexity predominate over residues 1050 to 1059; that stretch reads GNSSSVSEGK. The span at 1060-1072 shows a compositional bias: basic and acidic residues; the sequence is GSSERGSPIEKYM. Ser-1066 is subject to Phosphoserine. Lys-1070 is covalently cross-linked (Glycyl lysine isopeptide (Lys-Gly) (interchain with G-Cter in SUMO2)). Ser-1085 is modified (phosphoserine). The tract at residues 1163–1281 is transcriptional repressor domain; sequence PLDLAIKHSR…QVEKNGKPKE (119 aa). Residues 1168 to 1196 form a disordered region; that stretch reads IKHSRPGPTANGASKEKTKAPPNVKNEGP. Glycyl lysine isopeptide (Lys-Gly) (interchain with G-Cter in SUMO2); alternate cross-links involve residues Lys-1192 and Lys-1201. Residues Lys-1192 and Lys-1201 each participate in a glycyl lysine isopeptide (Lys-Gly) (interchain with G-Cter in SUMO); alternate cross-link. Residue Lys-1201 forms a Glycyl lysine isopeptide (Lys-Gly) (interchain with G-Cter in SUMO1); alternate linkage. C2H2-type zinc fingers lie at residues 1215–1237 and 1243–1267; these read TKCV…MSCH and FQCS…RGLH.

As to quaternary structure, interacts with RNF4; regulates TRPS1 repressor activity. Interacts specifically with the activator form of GLI3 (GLI3A) but not with the repressor form (GLI3R). Post-translationally, sumoylated. Sumoylation in the repressor domain inhibits the transcription repression activity. Sumoylation on Lys-1201 is the major site. Appears to be sumoylated on multiple sites. In terms of tissue distribution, ubiquitously expressed in the adult. Found in fetal brain, lung, kidney, liver, spleen and thymus. More highly expressed in androgen-dependent than in androgen-independent prostate cancer cells.

The protein localises to the nucleus. Its function is as follows. Transcriptional repressor. Binds specifically to GATA sequences and represses expression of GATA-regulated genes at selected sites and stages in vertebrate development. Regulates chondrocyte proliferation and differentiation. Executes multiple functions in proliferating chondrocytes, expanding the region of distal chondrocytes, activating proliferation in columnar cells and supporting the differentiation of columnar into hypertrophic chondrocytes. The sequence is that of Zinc finger transcription factor Trps1 (TRPS1) from Homo sapiens (Human).